The following is a 497-amino-acid chain: D-gluconate dehydratase (497 aa).

Glutamate 303 is a binding site for Mg(2+). The active-site Proton donor is the histidine 305. Mg(2+)-binding residues include glutamate 329 and glutamate 355. The active-site Proton acceptor is the histidine 405.

The protein belongs to the mandelate racemase/muconate lactonizing enzyme family. GaD subfamily. It depends on Mg(2+) as a cofactor.

It carries out the reaction D-gluconate = 2-dehydro-3-deoxy-D-gluconate + H2O. Its pathway is carbohydrate acid metabolism; D-gluconate degradation. Involved in the degradation of glucose via the Entner-Doudoroff pathway. Catalyzes the dehydration of gluconate to produce 2-keto-3-deoxygluconate (KDG). It is not able to use D-galactonate as substrate. This Thermoproteus tenax protein is D-gluconate dehydratase (gad).